The primary structure comprises 370 residues: MTVGIVEEKSVTFDTELRLESGRILGPITLAYETYGELNAARSNAILVAHAWTGNAHLAGRYSENEQKPGWWNEIVGPGKLLDTDRYFIICANVIGSCFGSTGPASINPKTGKKYNLSFPVITVRDMVRAQQLLIDHLGIDRLFSVMGGSMGGMQALEWATQFPERIASAIVLATTPRPSAQAISLNAVARWAIFNDPTWKKGEYRKNPKDGLALARGIGHITFLSDESMTAKFGRRFSARDGQFDFFGRFEVERYLSYNGYNFVDRFDANSFLYLAKALDLYDVAWGYESLEEAFAQVAAPIQFFAFSSDWLYPPAQTEEMVTTLEKLGKPVEYHLITSAYGHDAFLLEHETFTPMVRAFLEKVKTAAK.

Positions 44-350 (NAILVAHAWT…AYGHDAFLLE (307 aa)) constitute an AB hydrolase-1 domain. Ser150 functions as the Nucleophile in the catalytic mechanism. Arg217 is a binding site for substrate. Residues Asp311 and His344 contribute to the active site. A substrate-binding site is contributed by Asp345.

The protein belongs to the AB hydrolase superfamily. MetX family. Homodimer.

The protein resides in the cytoplasm. It catalyses the reaction L-homoserine + acetyl-CoA = O-acetyl-L-homoserine + CoA. The protein operates within amino-acid biosynthesis; L-methionine biosynthesis via de novo pathway; O-acetyl-L-homoserine from L-homoserine: step 1/1. In terms of biological role, transfers an acetyl group from acetyl-CoA to L-homoserine, forming acetyl-L-homoserine. In Geotalea uraniireducens (strain Rf4) (Geobacter uraniireducens), this protein is Homoserine O-acetyltransferase.